The chain runs to 72 residues: Large ribosomal subunit protein bL31c (72 aa).

Belongs to the bacterial ribosomal protein bL31 family. Type A subfamily. In terms of assembly, part of the 50S ribosomal subunit.

The protein localises to the plastid. It is found in the chloroplast. Functionally, binds the 23S rRNA. The protein is Large ribosomal subunit protein bL31c of Trieres chinensis (Marine centric diatom).